Here is a 1865-residue protein sequence, read N- to C-terminus: Dedicator of cytokinesis protein 1 (1865 aa).

One can recognise an SH3 domain in the interval 9 to 70; it reads REEKYGVAFY…PASYIHLKEA (62 aa). One can recognise a C2 DOCK-type domain in the interval 425 to 609; that stretch reads RNDIYVTLVQ…DSFQISTLVC (185 aa). Positions 1207–1617 constitute a DOCKER domain; it reads YKEIEREEMY…VEKQYGVRTM (411 aa). The disordered stretch occupies residues 1613-1723; the sequence is GVRTMPSGLD…FKPADSSLQQ (111 aa). The span at 1639 to 1664 shows a compositional bias: low complexity; that stretch reads PSSSRPLSVASVSSFSSDSTPSRPGS. Residues 1680 to 1694 are compositionally biased toward basic and acidic residues; that stretch reads RSQDKLDKDDPDKEK. A Phosphoserine modification is found at S1681. The segment at 1687–1695 is phosphoinositide-binding; sequence KDDPDKEKK. Residues 1695–1704 are compositionally biased toward basic residues; the sequence is KDKKKEKRNS. The span at 1705–1716 shows a compositional bias: basic and acidic residues; that stretch reads KHQEIFDKEFKP. S1743, S1756, S1761, and S1764 each carry phosphoserine. Disordered stretches follow at residues 1753 to 1778 and 1801 to 1865; these read RRFS…AKLS and PLPL…GIVQ. Residues 1756–1766 are compositionally biased toward low complexity; it reads SVSPASPSSQQ. Phosphothreonine is present on residues T1767 and T1772. Residues 1793–1819 are interaction with NCK2 second and third SH3 domain (minor); that stretch reads MDVADVPPPLPLKGNMADYGNLMENQD. The SH3-binding; interaction with CRK signature appears at 1799–1805; that stretch reads PPPLPLK. An interaction with NCK2 third SH3 domain (major) region spans residues 1820 to 1836; it reads MMVSPTSPPPPPPQRQQ. The span at 1825–1851 shows a compositional bias: pro residues; it reads TSPPPPPPQRQQPPPLPSKTPPPPPPK. An interaction with NCK2 (minor) region spans residues 1837–1852; the sequence is PPPLPSKTPPPPPPKT. The SH3-binding; interaction with CRK signature appears at 1838-1843; sequence PPLPSK. S1858 carries the phosphoserine modification.

The protein belongs to the DOCK family. In terms of assembly, interacts with the SH3 domains of CRK and NCK2 via multiple sites. Interacts with nucleotide-free RAC1 via its DOCKER domain. Interacts with ELMO1, ELMO2 and probably ELMO3 via its SH3 domain. Interacts with RAC1. Interacts with ELMO1 and ADGRB1. Identified in a complex with AUTS2 and ELMO2.

It localises to the cytoplasm. Its subcellular location is the membrane. In terms of biological role, involved in cytoskeletal rearrangements required for phagocytosis of apoptotic cells and cell motility. Along with DOCK1, mediates CRK/CRKL regulation of epithelial and endothelial cell spreading and migration on type IV collagen. Functions as a guanine nucleotide exchange factor (GEF), which activates Rac Rho small GTPases by exchanging bound GDP for free GTP. Its GEF activity may be enhanced by ELMO1. This Mus musculus (Mouse) protein is Dedicator of cytokinesis protein 1 (Dock1).